A 519-amino-acid chain; its full sequence is 6-phosphofructo-2-kinase/fructose-2,6-bisphosphatase 2 (519 aa).

The span at 1 to 17 shows a compositional bias: polar residues; that stretch reads MSENSTFSTEDSCNSSY. The interval 1-22 is disordered; the sequence is MSENSTFSTEDSCNSSYKPHAS. The residue at position 2 (serine 2) is an N-acetylserine. Residues 2 to 251 are 6-phosphofructo-2-kinase; that stretch reads SENSTFSTED…VYYLMNIHVH (250 aa). Serine 32 carries the post-translational modification Phosphoserine; by PKA. 48-56 provides a ligand contact to ATP; sequence GLPARGKTY. Residues arginine 81 and arginine 105 each coordinate beta-D-fructose 6-phosphate. Aspartate 131 is an active-site residue. The beta-D-fructose 6-phosphate site is built by threonine 133 and arginine 139. The active site involves cysteine 161. 170-175 is a binding site for ATP; sequence NILEVK. Lysine 175, arginine 196, and tyrosine 200 together coordinate beta-D-fructose 6-phosphate. The tract at residues 252–519 is fructose-2,6-bisphosphatase; that stretch reads PRTIYLCRHG…PKTQVSIPVV (268 aa). Residue arginine 259 participates in beta-D-fructose 2,6-bisphosphate binding. The active-site Tele-phosphohistidine intermediate is histidine 260. Positions 266 and 272 each coordinate beta-D-fructose 2,6-bisphosphate. Glutamate 329 acts as the Proton donor/acceptor in catalysis. Beta-D-fructose 2,6-bisphosphate-binding residues include tyrosine 340, arginine 354, lysine 358, tyrosine 369, glutamine 395, and arginine 399. 351–354 lines the ATP pocket; that stretch reads FALR. ATP contacts are provided by residues 395-399 and tyrosine 431; that span reads QAVMR. Residues 448–493 are disordered; sequence HRDKPTHNFPKSQTPVRMRRNSFTPLSSSNTIRRPRNYSVGSRPLK. The span at 456–479 shows a compositional bias: polar residues; the sequence is FPKSQTPVRMRRNSFTPLSSSNTI. Phosphoserine is present on serine 469. Position 471 is a phosphothreonine (threonine 471). Threonine 478 carries the phosphothreonine; by PKC modification. Serine 486 and serine 496 each carry phosphoserine. The tract at residues 500-519 is disordered; that stretch reads ALDMQEGADQPKTQVSIPVV. The segment covering 510–519 has biased composition (polar residues); it reads PKTQVSIPVV.

This sequence in the C-terminal section; belongs to the phosphoglycerate mutase family. As to quaternary structure, homodimer. Forms a heterodimer with PFKFB3. Post-translationally, phosphorylation by AMPK stimulates activity. As to expression, highest levels in kidney; also found in heart, brain, spleen, lung, liver, skeletal muscle and testis.

It carries out the reaction beta-D-fructose 2,6-bisphosphate + H2O = beta-D-fructose 6-phosphate + phosphate. The catalysed reaction is beta-D-fructose 6-phosphate + ATP = beta-D-fructose 2,6-bisphosphate + ADP + H(+). With respect to regulation, phosphorylation results in the activation of the kinase activity. Functionally, synthesis and degradation of fructose 2,6-bisphosphate. This chain is 6-phosphofructo-2-kinase/fructose-2,6-bisphosphatase 2 (Pfkfb2), found in Mus musculus (Mouse).